The chain runs to 260 residues: Malonyl-[acyl-carrier protein] O-methyltransferase (260 aa).

The protein belongs to the methyltransferase superfamily.

It carries out the reaction malonyl-[ACP] + S-adenosyl-L-methionine = malonyl-[ACP] methyl ester + S-adenosyl-L-homocysteine. It functions in the pathway cofactor biosynthesis; biotin biosynthesis. Functionally, converts the free carboxyl group of a malonyl-thioester to its methyl ester by transfer of a methyl group from S-adenosyl-L-methionine (SAM). It allows to synthesize pimeloyl-ACP via the fatty acid synthetic pathway. The sequence is that of Malonyl-[acyl-carrier protein] O-methyltransferase from Chlorobium phaeovibrioides (strain DSM 265 / 1930) (Prosthecochloris vibrioformis (strain DSM 265)).